Here is an 88-residue protein sequence, read N- to C-terminus: Cell division topological specificity factor (88 aa).

The protein belongs to the MinE family.

Its function is as follows. Prevents the cell division inhibition by proteins MinC and MinD at internal division sites while permitting inhibition at polar sites. This ensures cell division at the proper site by restricting the formation of a division septum at the midpoint of the long axis of the cell. This chain is Cell division topological specificity factor, found in Escherichia coli (strain SMS-3-5 / SECEC).